Here is a 176-residue protein sequence, read N- to C-terminus: NAD(P)H-quinone oxidoreductase subunit I, chloroplastic (176 aa).

2 consecutive 4Fe-4S ferredoxin-type domains span residues 55-84 (GRIH…VDWE) and 95-124 (LNYS…MTEE). Residues Cys64, Cys67, Cys70, Cys74, Cys104, Cys107, Cys110, and Cys114 each contribute to the [4Fe-4S] cluster site.

This sequence belongs to the complex I 23 kDa subunit family. As to quaternary structure, NDH is composed of at least 16 different subunits, 5 of which are encoded in the nucleus. It depends on [4Fe-4S] cluster as a cofactor.

It localises to the plastid. The protein localises to the chloroplast thylakoid membrane. It carries out the reaction a plastoquinone + NADH + (n+1) H(+)(in) = a plastoquinol + NAD(+) + n H(+)(out). The enzyme catalyses a plastoquinone + NADPH + (n+1) H(+)(in) = a plastoquinol + NADP(+) + n H(+)(out). Its function is as follows. NDH shuttles electrons from NAD(P)H:plastoquinone, via FMN and iron-sulfur (Fe-S) centers, to quinones in the photosynthetic chain and possibly in a chloroplast respiratory chain. The immediate electron acceptor for the enzyme in this species is believed to be plastoquinone. Couples the redox reaction to proton translocation, and thus conserves the redox energy in a proton gradient. The polypeptide is NAD(P)H-quinone oxidoreductase subunit I, chloroplastic (Populus alba (White poplar)).